Reading from the N-terminus, the 225-residue chain is ATP-dependent dethiobiotin synthetase BioD (225 aa).

12-17 (EVGKTY) contacts ATP. Threonine 16 lines the Mg(2+) pocket. Lysine 37 is a catalytic residue. Serine 41 serves as a coordination point for substrate. ATP contacts are provided by residues aspartate 52, 114–117 (EGAG), and 174–175 (NC). Positions 52 and 114 each coordinate Mg(2+).

Belongs to the dethiobiotin synthetase family. As to quaternary structure, homodimer. Mg(2+) is required as a cofactor.

It is found in the cytoplasm. It catalyses the reaction (7R,8S)-7,8-diammoniononanoate + CO2 + ATP = (4R,5S)-dethiobiotin + ADP + phosphate + 3 H(+). It participates in cofactor biosynthesis; biotin biosynthesis; biotin from 7,8-diaminononanoate: step 1/2. In terms of biological role, catalyzes a mechanistically unusual reaction, the ATP-dependent insertion of CO2 between the N7 and N8 nitrogen atoms of 7,8-diaminopelargonic acid (DAPA, also called 7,8-diammoniononanoate) to form a ureido ring. In Francisella tularensis subsp. mediasiatica (strain FSC147), this protein is ATP-dependent dethiobiotin synthetase BioD.